Consider the following 523-residue polypeptide: Sucrose 6(F)-phosphate phosphorylase (523 aa).

Sucrose 6(F)-phosphate-binding positions include Asp58, His96, 221 to 223, Glu264, 326 to 327, and Lys434; these read RLD and HD. Asp223 acts as the Nucleophile in catalysis. The Proton donor/acceptor role is filled by Glu264.

It belongs to the glycosyl hydrolase 13 family. Sucrose phosphorylase subfamily. In terms of assembly, monomer.

The enzyme catalyses sucrose 6(F)-phosphate + phosphate = beta-D-fructose 6-phosphate + alpha-D-glucose 1-phosphate. Its function is as follows. Catalyzes the reversible phosphorolysis of sucrose 6(F)-phosphate into alpha-D-glucose 1-phosphate (Glc1P) and D-fructose 6-phosphate. May be involved in a new pathway for the degradation of sucrose, which could become phosphorylated on its fructose moiety during uptake via a PTS system. Shows strict specificity since it does not catalyze reactions with alternative substrates. In Ilumatobacter coccineus (strain NBRC 103263 / KCTC 29153 / YM16-304), this protein is Sucrose 6(F)-phosphate phosphorylase.